We begin with the raw amino-acid sequence, 178 residues long: Probable host range protein 2 (178 aa).

The protein belongs to the poxviridae C7 protein family.

Functionally, plays a role for multiplication of the virus in different cell types. This is Probable host range protein 2 from Yaba-like disease virus (YLDV).